The chain runs to 617 residues: Zinc finger protein 613 (617 aa).

A KRAB domain is found at 8–78; the sequence is LTLEDVAVEF…ENEIHSQICP (71 aa). 12 C2H2-type zinc fingers span residues 204–226, 232–254, 260–282, 288–310, 316–338, 344–366, 372–394, 400–422, 428–450, 456–478, 484–506, and 512–535; these read HVCT…QRVH, HGCS…QRNH, YECT…QKIH, YICS…QRVH, HGCS…QRTH, YECT…QKAH, YICR…QRIH, YICN…RRTH, YVCN…QRFH, FVCT…QRIH, YTCS…RRTH, and YGCS…GMLH.

It belongs to the krueppel C2H2-type zinc-finger protein family.

Its subcellular location is the nucleus. May be involved in transcriptional regulation. The sequence is that of Zinc finger protein 613 (ZNF613) from Homo sapiens (Human).